Reading from the N-terminus, the 523-residue chain is Thiamine pathway transporter THI73 (523 aa).

At 1 to 79 the chain is on the cytoplasmic side; the sequence is MKNMSQRSMD…LSPKVLRKVD (79 aa). Residues 80 to 100 traverse the membrane as a helical segment; it reads LFILPFLCCTYLLMFLDKALL. The Extracellular portion of the chain corresponds to 101 to 118; that stretch reads NYAASMGIKDHLKGNEFS. A helical transmembrane segment spans residues 119–139; that stretch reads NLGTIFSAAYIFMEPVVTYLI. At 140-141 the chain is on the cytoplasmic side; sequence QK. A helical membrane pass occupies residues 142-162; that stretch reads FPISKILGTFITVWGIVLACH. The Extracellular portion of the chain corresponds to 163–176; the sequence is AACKTYASLMVVRT. The chain crosses the membrane as a helical span at residues 177–197; the sequence is LLGLFESSSAVGCIAISGMYY. The Cytoplasmic portion of the chain corresponds to 198 to 207; it reads TKSEQSARIG. A helical membrane pass occupies residues 208-228; sequence FWATQAGTGYIVGGLISFGFL. Residues 229–239 lie on the Extracellular side of the membrane; sequence HYHGTAFTSWQ. A helical transmembrane segment spans residues 240-260; that stretch reads IMFLVVGLVTVAFGVLTFLYL. Over 261 to 312 the chain is Cytoplasmic; that stretch reads PDNVTNAWFLNKEEKIQVVEHIRANQTGLETKKFKKQQVKELFLHDKFTWPM. A helical transmembrane segment spans residues 313–333; it reads LLLTACSQISTGAIGTFSVTI. The Extracellular portion of the chain corresponds to 334–345; that stretch reads TGTFGFDKYETA. Residues 346 to 366 form a helical membrane-spanning segment; that stretch reads LLQLPIGAITAMIILITTQML. The Cytoplasmic segment spans residues 367–371; the sequence is SRWGH. The chain crosses the membrane as a helical span at residues 372–392; that stretch reads ITLITTSMYIPAIIGCIVLIS. Topologically, residues 393 to 400 are extracellular; sequence LPLSHKIG. A helical transmembrane segment spans residues 401 to 421; that stretch reads NLFSLYLLYSGSCVITNIYIW. Residues 422-432 are Cytoplasmic-facing; it reads NSCNTSGYTKR. Residues 433-452 form a helical membrane-spanning segment; sequence VFRNAITMIVYNVSCIIAPQ. Residues 453-466 are Extracellular-facing; the sequence is MFRAYSAPRYIPAK. A helical membrane pass occupies residues 467 to 487; sequence IALLVTQCVCVPLQLYIGYIC. The Cytoplasmic portion of the chain corresponds to 488-523; that stretch reads KKENEKRDKEQEGQERKKYQFLDLTDIENRNFRYIY.

This sequence belongs to the major facilitator superfamily. Allantoate permease family.

It localises to the endoplasmic reticulum membrane. It is found in the cell membrane. Transports either thiamine or, rather, a related metabolite involved in the thiamine biosynthesis pathway. This is Thiamine pathway transporter THI73 (THI73) from Saccharomyces cerevisiae (strain ATCC 204508 / S288c) (Baker's yeast).